Consider the following 107-residue polypeptide: Thiosulfate sulfurtransferase GlpE (107 aa).

In terms of domain architecture, Rhodanese spans 17–105 (RQGEAVLVDI…WLKAFPLETE (89 aa)). Cys-65 acts as the Cysteine persulfide intermediate in catalysis.

This sequence belongs to the GlpE family.

Its subcellular location is the cytoplasm. It catalyses the reaction thiosulfate + hydrogen cyanide = thiocyanate + sulfite + 2 H(+). The enzyme catalyses thiosulfate + [thioredoxin]-dithiol = [thioredoxin]-disulfide + hydrogen sulfide + sulfite + 2 H(+). In terms of biological role, transferase that catalyzes the transfer of sulfur from thiosulfate to thiophilic acceptors such as cyanide or dithiols. May function in a CysM-independent thiosulfate assimilation pathway by catalyzing the conversion of thiosulfate to sulfite, which can then be used for L-cysteine biosynthesis. The chain is Thiosulfate sulfurtransferase GlpE from Sodalis glossinidius (strain morsitans).